The following is a 522-amino-acid chain: Cytochrome P450 1A1 (522 aa).

Phe-229 contacts substrate. Position 463 (Cys-463) interacts with heme.

It belongs to the cytochrome P450 family. Requires heme as cofactor. Liver.

It is found in the endoplasmic reticulum membrane. The protein localises to the microsome membrane. It carries out the reaction an organic molecule + reduced [NADPH--hemoprotein reductase] + O2 = an alcohol + oxidized [NADPH--hemoprotein reductase] + H2O + H(+). In terms of biological role, cytochromes P450 are a group of heme-thiolate monooxygenases. They oxidize a variety of structurally unrelated compounds, including steroids, fatty acids, and xenobiotics. This Oncorhynchus mykiss (Rainbow trout) protein is Cytochrome P450 1A1 (cyp1a1).